Here is a 1255-residue protein sequence, read N- to C-terminus: DNA-directed RNA polymerase subunit beta' (1255 aa).

4 residues coordinate Zn(2+): C60, C62, C77, and C80. Mg(2+) contacts are provided by D503, D505, and D507. Residues C875, C950, C957, and C960 each coordinate Zn(2+).

The protein belongs to the RNA polymerase beta' chain family. As to quaternary structure, the RNAP catalytic core consists of 2 alpha, 1 beta, 1 beta' and 1 omega subunit. When a sigma factor is associated with the core the holoenzyme is formed, which can initiate transcription. Mg(2+) is required as a cofactor. Requires Zn(2+) as cofactor.

It catalyses the reaction RNA(n) + a ribonucleoside 5'-triphosphate = RNA(n+1) + diphosphate. DNA-dependent RNA polymerase catalyzes the transcription of DNA into RNA using the four ribonucleoside triphosphates as substrates. The protein is DNA-directed RNA polymerase subunit beta' of Mycoplasma mycoides subsp. mycoides SC (strain CCUG 32753 / NCTC 10114 / PG1).